We begin with the raw amino-acid sequence, 702 residues long: p-hydroxybenzoic acid--AMP ligase FadD22 (702 aa).

Positions 538–616 (ERHRLVLDAV…GLAQYLEAEL (79 aa)) constitute a Carrier domain. Ser576 bears the O-(pantetheine 4'-phosphoryl)serine mark.

This sequence belongs to the ATP-dependent AMP-binding enzyme family.

The enzyme catalyses holo-[4-hydroxyphenylalkanoate synthase] + 4-hydroxybenzoate + ATP = 4-hydroxyphenyl-[4-hydroxyphenylalkanoate synthase] + AMP + diphosphate. It functions in the pathway lipid metabolism; fatty acid biosynthesis. Functionally, catalyzes the adenylation of p-hydroxybenzoic acid (pHBA) to form p-hydroxybenzoic acid-AMP (pHBA-AMP), which is converted directly to p-hydroxybenzoyl-S-FadD22 (pHBA-S-FAdD22) thioester intermediate in a CoA-independent manner by attack of the phosphopantetheine thiol of FadD22. This intermediate primes the biosynthesis of the phenolphthiocerol (PPOL) by presenting the pHBA starter unit for elongation by Pks15/1. PPOL is an important intermediate in the biosynthesis of phenolic glycolipid (mycosid B). In Mycobacterium marinum (strain ATCC BAA-535 / M), this protein is p-hydroxybenzoic acid--AMP ligase FadD22 (fadD22).